We begin with the raw amino-acid sequence, 380 residues long: Cytochrome b (380 aa).

4 helical membrane passes run 34 to 54 (FGSL…LLAM), 78 to 99 (WLLH…FLHI), 114 to 134 (WNTG…GYVL), and 179 to 199 (FFAL…IHLM). Heme b-binding residues include histidine 84 and histidine 98. Heme b is bound by residues histidine 183 and histidine 197. Residue histidine 202 coordinates a ubiquinone. The next 4 helical transmembrane spans lie at 227 to 247 (IKDI…TLFS), 289 to 309 (LGGV…PFLH), 321 to 341 (LSQT…WVGS), and 348 to 368 (FIII…ILFP).

It belongs to the cytochrome b family. The cytochrome bc1 complex contains 11 subunits: 3 respiratory subunits (MT-CYB, CYC1 and UQCRFS1), 2 core proteins (UQCRC1 and UQCRC2) and 6 low-molecular weight proteins (UQCRH/QCR6, UQCRB/QCR7, UQCRQ/QCR8, UQCR10/QCR9, UQCR11/QCR10 and a cleavage product of UQCRFS1). This cytochrome bc1 complex then forms a dimer. It depends on heme b as a cofactor.

It is found in the mitochondrion inner membrane. Functionally, component of the ubiquinol-cytochrome c reductase complex (complex III or cytochrome b-c1 complex) that is part of the mitochondrial respiratory chain. The b-c1 complex mediates electron transfer from ubiquinol to cytochrome c. Contributes to the generation of a proton gradient across the mitochondrial membrane that is then used for ATP synthesis. The sequence is that of Cytochrome b (MT-CYB) from Meleagris gallopavo (Wild turkey).